The sequence spans 190 residues: Large ribosomal subunit protein bL9 (190 aa).

This sequence belongs to the bacterial ribosomal protein bL9 family.

Functionally, binds to the 23S rRNA. The polypeptide is Large ribosomal subunit protein bL9 (Rhodobacter capsulatus (strain ATCC BAA-309 / NBRC 16581 / SB1003)).